The following is a 307-amino-acid chain: UDP-3-O-acyl-N-acetylglucosamine deacetylase (307 aa).

Residues His-78, His-241, and Asp-245 each coordinate Zn(2+). His-268 (proton donor) is an active-site residue.

It belongs to the LpxC family. Requires Zn(2+) as cofactor.

The catalysed reaction is a UDP-3-O-[(3R)-3-hydroxyacyl]-N-acetyl-alpha-D-glucosamine + H2O = a UDP-3-O-[(3R)-3-hydroxyacyl]-alpha-D-glucosamine + acetate. It functions in the pathway glycolipid biosynthesis; lipid IV(A) biosynthesis; lipid IV(A) from (3R)-3-hydroxytetradecanoyl-[acyl-carrier-protein] and UDP-N-acetyl-alpha-D-glucosamine: step 2/6. In terms of biological role, catalyzes the hydrolysis of UDP-3-O-myristoyl-N-acetylglucosamine to form UDP-3-O-myristoylglucosamine and acetate, the committed step in lipid A biosynthesis. The protein is UDP-3-O-acyl-N-acetylglucosamine deacetylase of Verminephrobacter eiseniae (strain EF01-2).